A 100-amino-acid chain; its full sequence is Toxin Rv0299 (100 aa).

Its function is as follows. Toxic component of a type II toxin-antitoxin (TA) system. Upon expression in M.smegmatis inhibits colony formation. Its toxic effect is neutralized by coexpression with cognate antitoxin Rv0298/MT0312. The polypeptide is Toxin Rv0299 (Mycobacterium tuberculosis (strain ATCC 25618 / H37Rv)).